Reading from the N-terminus, the 317-residue chain is Ribosomal protein L11 methyltransferase (317 aa).

Threonine 158, glycine 179, aspartate 201, and asparagine 244 together coordinate S-adenosyl-L-methionine.

Belongs to the methyltransferase superfamily. PrmA family.

It localises to the cytoplasm. The enzyme catalyses L-lysyl-[protein] + 3 S-adenosyl-L-methionine = N(6),N(6),N(6)-trimethyl-L-lysyl-[protein] + 3 S-adenosyl-L-homocysteine + 3 H(+). Its function is as follows. Methylates ribosomal protein L11. This Lactococcus lactis subsp. cremoris (strain SK11) protein is Ribosomal protein L11 methyltransferase.